The sequence spans 340 residues: Ras association domain-containing protein 1 (340 aa).

S2 carries the post-translational modification N-acetylserine. S2 carries the post-translational modification Phosphoserine. The tract at residues 2–115 (SAEPELIELR…DLGWDSALER (114 aa)) is mediates interaction with E4F1. The segment at 51–101 (GHRFQPAGPTTHTWCDLCGDFIWGVVRKGLQCAHCKFTCHYRCRALVCLDC) adopts a Phorbol-ester/DAG-type zinc-finger fold. The segment covering 175 to 185 (SVPSSKKPPSL) has biased composition (low complexity). Positions 175–196 (SVPSSKKPPSLQDARRGTGRST) are disordered. Residues 194-288 (RSTAVKRRTS…LSFVLKENDS (95 aa)) enclose the Ras-associating domain. The SARAH domain maps to 290–337 (EVNWDAFSMPELHNFLRILQREEEEHLRQILQKYSRCRQKIQEALHAC). Residues 311 to 314 (EEEE) form an MOAP1-binding region.

Interacts with MAP1S and XPA. Binds to the N-terminal of CDC20 during prometaphase. Binds to STK3/MST2 and STK4/MST1. Recruited to the TNFRSF1A and TNFRSF10A complexes in response to their respective cognate ligand, after internalization. Can self-associate. Part of a complex with MDM2, DAXX, RASSF1 and USP7. As to quaternary structure, interacts with MOAP1 and E4F1. Interacts with RSSF5 and probably associates with HRAS via a RSSF1 isoform A-RSSF5 heterodimer. Interacts (via C-terminus) with DAXX (via N-terminus); the interaction is independent of MDM2 and TP53. Interacts (via N-terminus) with MDM2 (via C-terminus); the interaction is independent of TP53. Interacts with RAB39A. Interacts with RAB39B; the interaction is weak. In terms of assembly, interacts with ECM2. Interacts with RAB39B; the interaction is strong. Does not interact with RAB39A.

The protein localises to the cytoplasm. It is found in the cytoskeleton. Its subcellular location is the microtubule organizing center. The protein resides in the centrosome. It localises to the spindle. The protein localises to the spindle pole. It is found in the nucleus. In terms of biological role, potential tumor suppressor. Required for death receptor-dependent apoptosis. Mediates activation of Mediates activation of STK3/MST2 and STK4/MST1 during Fas-induced apoptosis by preventing their dephosphorylation. When associated with MOAP1, promotes BAX conformational change and translocation to mitochondrial membranes in response to TNF and TNFSF10 stimulation. Isoform A interacts with CDC20, an activator of the anaphase-promoting complex, APC, resulting in the inhibition of APC activity and mitotic progression. Inhibits proliferation by negatively regulating cell cycle progression at the level of G1/S-phase transition by regulating accumulation of cyclin D1 protein. Isoform C has been shown not to perform these roles, no function has been identified for this isoform. Isoform A disrupts interactions among MDM2, DAXX and USP7, thus contributing to the efficient activation of TP53 by promoting MDM2 self-ubiquitination in cell-cycle checkpoint control in response to DNA damage. This chain is Ras association domain-containing protein 1, found in Mus musculus (Mouse).